Here is a 273-residue protein sequence, read N- to C-terminus: Ribosomal RNA small subunit methyltransferase A (273 aa).

Residues N23, I25, G50, E72, D97, and N116 each coordinate S-adenosyl-L-methionine.

The protein belongs to the class I-like SAM-binding methyltransferase superfamily. rRNA adenine N(6)-methyltransferase family. RsmA subfamily.

The protein resides in the cytoplasm. It carries out the reaction adenosine(1518)/adenosine(1519) in 16S rRNA + 4 S-adenosyl-L-methionine = N(6)-dimethyladenosine(1518)/N(6)-dimethyladenosine(1519) in 16S rRNA + 4 S-adenosyl-L-homocysteine + 4 H(+). Specifically dimethylates two adjacent adenosines (A1518 and A1519) in the loop of a conserved hairpin near the 3'-end of 16S rRNA in the 30S particle. May play a critical role in biogenesis of 30S subunits. The protein is Ribosomal RNA small subunit methyltransferase A of Rickettsia akari (strain Hartford).